The following is a 223-amino-acid chain: 7-cyano-7-deazaguanine synthase (223 aa).

ATP is bound at residue 15-25; sequence FSGGQDSTTCL. Residues Cys-191, Cys-200, Cys-203, and Cys-206 each contribute to the Zn(2+) site.

This sequence belongs to the QueC family. Homodimer. Zn(2+) serves as cofactor.

It carries out the reaction 7-carboxy-7-deazaguanine + NH4(+) + ATP = 7-cyano-7-deazaguanine + ADP + phosphate + H2O + H(+). It participates in purine metabolism; 7-cyano-7-deazaguanine biosynthesis. In terms of biological role, catalyzes the ATP-dependent conversion of 7-carboxy-7-deazaguanine (CDG) to 7-cyano-7-deazaguanine (preQ(0)). In Staphylococcus epidermidis (strain ATCC 35984 / DSM 28319 / BCRC 17069 / CCUG 31568 / BM 3577 / RP62A), this protein is 7-cyano-7-deazaguanine synthase.